The primary structure comprises 468 residues: Glutamate--tRNA ligase 2 (468 aa).

Residues 11–21 carry the 'HIGH' region motif; sequence PSPTGFLHIGG. A 'KMSKS' region motif is present at residues 239–243; that stretch reads KLSKR. Lysine 242 serves as a coordination point for ATP.

It belongs to the class-I aminoacyl-tRNA synthetase family. Glutamate--tRNA ligase type 1 subfamily. Monomer.

Its subcellular location is the cytoplasm. It carries out the reaction tRNA(Glu) + L-glutamate + ATP = L-glutamyl-tRNA(Glu) + AMP + diphosphate. Functionally, catalyzes the attachment of glutamate to tRNA(Glu) in a two-step reaction: glutamate is first activated by ATP to form Glu-AMP and then transferred to the acceptor end of tRNA(Glu). The chain is Glutamate--tRNA ligase 2 from Ruegeria pomeroyi (strain ATCC 700808 / DSM 15171 / DSS-3) (Silicibacter pomeroyi).